The following is a 525-amino-acid chain: Tigger transposable element-derived protein 2 (525 aa).

One can recognise an HTH psq-type domain in the interval 1–52 (MLGKRKRVVLTIKDKLDIIKKLEEGNSFKKLSVLYGIGESTVRDIKKNKERI). DNA-binding regions (H-T-H motif) lie at residues 28 to 48 (FKKL…IKKN) and 100 to 132 (TICA…FKQR). One can recognise an HTH CENPB-type domain in the interval 67 to 139 (KRKSMKSSTY…KQRHGIPKAA (73 aa)). A DDE-1 domain is found at 168–385 (LLPEQIYGAD…IRSNTITRAW (218 aa)).

It belongs to the tigger transposable element derived protein family.

Its subcellular location is the nucleus. This chain is Tigger transposable element-derived protein 2 (Tigd2), found in Mus musculus (Mouse).